A 468-amino-acid chain; its full sequence is Protein maelstrom 2 (468 aa).

The segment at residues 2–69 (PPKKHSGFMM…LTRVKKERLN (68 aa)) is a DNA-binding region (HMG box). Positions 374–393 (KEDSPTVLSPASSRRSLASS) are disordered. A compositionally biased stretch (low complexity) spans 381-393 (LSPASSRRSLASS).

Belongs to the maelstrom family.

The protein resides in the cytoplasm. Its subcellular location is the nucleus. Involved both in the piRNA and miRNA metabolic processes. As a component of the meiotic nuage, plays a central role during oogenesis by repressing transposable elements and preventing their mobilization, which is essential for the germline integrity. Repression of transposable elements is mediated via the piRNA metabolic process, which mediates the repression of transposable elements during meiosis by forming complexes composed of piRNAs and Piwi proteins and governs the repression of transposons. As a nuclear component, it is required for proper differentiation in the germline stem cell (GSC) lineage by repressing microRNA-7 (miR-7), thereby acting as an indirect regulator of bag-of-marbles (Bam). Acts by binding to the promoter of miR-7 gene and repressing its expression; miR-7 repression alleviates the Bam repression by miR-7, thereby allowing differentiation in the germline stem cell (GSC) lineage. This Drosophila ananassae (Fruit fly) protein is Protein maelstrom 2 (mael2).